Reading from the N-terminus, the 113-residue chain is Ribonuclease P protein component (113 aa).

The segment covering M1–T10 has biased composition (basic residues). The interval M1 to R23 is disordered.

The protein belongs to the RnpA family. Consists of a catalytic RNA component (M1 or rnpB) and a protein subunit.

The enzyme catalyses Endonucleolytic cleavage of RNA, removing 5'-extranucleotides from tRNA precursor.. Its function is as follows. RNaseP catalyzes the removal of the 5'-leader sequence from pre-tRNA to produce the mature 5'-terminus. It can also cleave other RNA substrates such as 4.5S RNA. The protein component plays an auxiliary but essential role in vivo by binding to the 5'-leader sequence and broadening the substrate specificity of the ribozyme. The protein is Ribonuclease P protein component of Kocuria rhizophila (strain ATCC 9341 / DSM 348 / NBRC 103217 / DC2201).